A 198-amino-acid polypeptide reads, in one-letter code: Inner membrane-spanning protein YciB (198 aa).

5 consecutive transmembrane segments (helical) span residues 36-56 (IYSA…AIFI), 67-87 (LTLV…SETF), 90-110 (WKAP…HFIG), 135-155 (VAWI…AFTF), and 162-182 (FKVF…GIYL).

This sequence belongs to the YciB family.

It localises to the cell inner membrane. Plays a role in cell envelope biogenesis, maintenance of cell envelope integrity and membrane homeostasis. The chain is Inner membrane-spanning protein YciB from Pseudomonas fluorescens (strain SBW25).